A 195-amino-acid chain; its full sequence is Nucleoside triphosphate pyrophosphatase (195 aa).

Asp76 acts as the Proton acceptor in catalysis.

It belongs to the Maf family. A divalent metal cation is required as a cofactor.

It localises to the cytoplasm. It catalyses the reaction a ribonucleoside 5'-triphosphate + H2O = a ribonucleoside 5'-phosphate + diphosphate + H(+). The enzyme catalyses a 2'-deoxyribonucleoside 5'-triphosphate + H2O = a 2'-deoxyribonucleoside 5'-phosphate + diphosphate + H(+). Nucleoside triphosphate pyrophosphatase. May have a dual role in cell division arrest and in preventing the incorporation of modified nucleotides into cellular nucleic acids. In Pelagibacter ubique (strain HTCC1062), this protein is Nucleoside triphosphate pyrophosphatase.